Reading from the N-terminus, the 338-residue chain is Decarboxylase macB (338 aa).

Zn(2+) is bound by residues histidine 7, histidine 9, histidine 159, and aspartate 283.

The protein belongs to the metallo-dependent hydrolases superfamily. ACMSD family.

The catalysed reaction is 6-methylsalicylate + H(+) = 3-methylphenol + CO2. It functions in the pathway secondary metabolite biosynthesis; terpenoid biosynthesis. Its function is as follows. Decarboxylase; part of the gene cluster that mediates the biosynthesis of macrophorins, isoprenoid epoxycyclohexenones containing cyclized drimane moieties. The first step of the pathway is the synthesis of 6-methylsalicylic acid (6-MSA) by the polyketide synthase macA. 6-MSA is then converted to m-cresol by the decarboxylase macB. The cytochrome P450 monooxygenase macC then catalyzes the oxidation of m-cresol to toluquinol. Epoxidation of toluquinol is then performed by the short chain dehydrogenase macD, with the help of macE, and a further prenylation by macG leads to 7-deacetoxyyanuthone A. The next step is the hydroxylation of C-22 of 7-deacetoxyyanuthone A by the cytochrome P450 monooxygenase macH to yield 22-deacetylyanuthone A. O-Mevalon transferase macI then attaches mevalon to the hydroxyl group of 22-deacetylyanuthone A to produce yanuthone E. The terpene cyclase macJ catalyzes the cyclization of 22-deacetylyanuthone A to macrophorin A. MacJ is also able to catalyze cyclization of yanuthone E and 7-deacetoxyyanuthone A to their corresponding macrophorins. The macJ products can be further modified by macH and macJ, as well as by the FAD-dependent monooxygenase macF, to produce additional macrophorins, including 4'-oxomacrophorin A, 4'-oxomacrophorin D and 4'-oxomacrophorin E. The protein is Decarboxylase macB of Penicillium terrestre.